The chain runs to 838 residues: MNMQMADVQTRPARTAPTYAPAIDTIKEAVRRAEQRIAPLWPLRYFVAVNPYLGLIDHSFESAAYILARRAGARMTAPRSFYAQAIRSGRITDADLEAALAGGSPFPGAPANVAALKAFALGDEPEPTFPILPTVADAARKVTGINWADVVTDLISTWAGAYFDLGQSYWRSPWKHLPPYAAWRAEAAHDRTPQTRGVHGFRQALREMPESAMETIVAAVEKLNIPINGLEAYLHRLLLSIHGWAAYARYLRWDAELYGGEDHTLTDLLAIRLVWEVALWHSFARKGVADVWRSMAGEYVNDRPDPALQRALAGDLLLQRAFEKAYQRQFFAQLGATTPARVAARKRVQAAFCIDVRSEIFRRALETVTDEIETIGFAGFFGFPIEYVPLAETRGGAQCPVLLTPQFVIAESVDGASERDVNAAIEKRAQNQRVAKAWRMFKFAPISCFGFVGPVGLAYVRKLALDTLGITRPVPHPATFGLDAHTRERVAPSLEPRTLGGRTTGMTLEQRVAAAEGALKAMSLTNNFARLVLLTGHGSTTVNNPHATGLDCGACGGHTGEANVRVAVRILNDPAVRAGLKERGLIIPDDTVFLAGLHDTTTDDVTIFDKAHIPASHTADLKRLEADLAAAGRLARAERSMLLKIGTKTDIDSAVRRRSKDWSQVRPEWGLAGCAAFIVAPRDRNAGVVMNGRSFLHSYEWRQDEGFGVLELIMTAPMIVASWINLQYYGSTVDNRVFGSGNKTLHNVVGTLGVLEGNAGDLRVGLPWQSVHDGEKYVHEPMRLHVMIEAPIDAMTAIIARHEQVRQLLDNGWLYLFALDASGKVTHRYIGGLQWEEC.

The Zn(2+) site is built by Cys353, Asp355, His537, and Cys552.

This sequence belongs to the inorganic carbon transporter (TC 9.A.2) DabA family. As to quaternary structure, forms a complex with DabB. Zn(2+) serves as cofactor.

It is found in the cell membrane. Its function is as follows. Part of an energy-coupled inorganic carbon pump. This Roseiflexus sp. (strain RS-1) protein is Probable inorganic carbon transporter subunit DabA.